Here is a 412-residue protein sequence, read N- to C-terminus: Glucose-1-phosphate adenylyltransferase (412 aa).

Alpha-D-glucose 1-phosphate contacts are provided by residues glycine 169, 184-185, and serine 201; that span reads EK.

Belongs to the bacterial/plant glucose-1-phosphate adenylyltransferase family. Homotetramer.

The catalysed reaction is alpha-D-glucose 1-phosphate + ATP + H(+) = ADP-alpha-D-glucose + diphosphate. It participates in glycan biosynthesis; glycogen biosynthesis. Its function is as follows. Involved in the biosynthesis of ADP-glucose, a building block required for the elongation reactions to produce glycogen. Catalyzes the reaction between ATP and alpha-D-glucose 1-phosphate (G1P) to produce pyrophosphate and ADP-Glc. This chain is Glucose-1-phosphate adenylyltransferase, found in Geobacter metallireducens (strain ATCC 53774 / DSM 7210 / GS-15).